We begin with the raw amino-acid sequence, 1958 residues long: Sodium channel protein type 10 subunit alpha (1958 aa).

Over 1-125 (MEFPFGSVGT…FNLIRRTAIK (125 aa)) the chain is Cytoplasmic. The disordered stretch occupies residues 27–54 (QIAAHRAAKKGRPKQRGQKDKSEKPRPQ). Residues 32–42 (RAAKKGRPKQR) are compositionally biased toward basic residues. The segment covering 43-54 (GQKDKSEKPRPQ) has biased composition (basic and acidic residues). The stretch at 116 to 404 (FNLIRRTAIK…VTMAYEEQSQ (289 aa)) is one I repeat. The helical transmembrane segment at 126–149 (VSVHSWFSIFITVTILVNCVCMTR) threads the bilayer. Residues 150 to 154 (TDLPE) are Extracellular-facing. The helical transmembrane segment at 155-174 (KLEYAFTVVYTFEALIKILA) threads the bilayer. The Cytoplasmic portion of the chain corresponds to 175-187 (RGFCLNEFTYLRD). Residues 188-206 (PWNWLDFSVITLAYVGAAI) traverse the membrane as a helical segment. The Extracellular portion of the chain corresponds to 207–212 (DLRGIS). Residues 213–232 (GLRTFRVLRALKTVSVIPGL) form a helical; Voltage-sensor membrane-spanning segment. At 233–248 (KVIVGALIHSVRKLAD) the chain is on the cytoplasmic side. A helical transmembrane segment spans residues 249–272 (VTILTVFCLSVFALVGLQLFKGNL). Residues 273 to 340 (KNKCIKNGTD…PDFNYTSFDS (68 aa)) are Extracellular-facing. Cysteine 276 and cysteine 318 are oxidised to a cystine. Residues asparagine 279, asparagine 288, asparagine 311, and asparagine 334 are each glycosylated (N-linked (GlcNAc...) asparagine). Residues 341–365 (FAWAFLSLFRLMTQDSWERLYQQTL) constitute an intramembrane region (pore-forming). Over 366-372 (RASGKMY) the chain is Extracellular. The chain crosses the membrane as a helical span at residues 373 to 398 (MVFFVLVIFLGSFYLVNLILAVVTMA). Over 399–658 (YEEQSQATIA…KWKKFKMVLF (260 aa)) the chain is Cytoplasmic. Phosphoserine occurs at positions 440, 443, 466, and 478. 2 disordered regions span residues 444-483 (HNGS…PYNQ) and 539-583 (GRGA…APEG). Over residues 549–560 (PRSPLPQSPNPG) the composition is skewed to pro residues. 2 positions are modified to phosphoserine: serine 611 and serine 614. One copy of the II repeat lies at 646–910 (CCPKWKKFKM…EDDGEVNNLQ (265 aa)). A helical transmembrane segment spans residues 659 to 683 (ELVTDPFAELTITLCIVVNTVFMAM). At 684–694 (EHYPMTDAFDA) the chain is on the extracellular side. The chain crosses the membrane as a helical span at residues 695–718 (MLQAGNIVFTVFFTMEMAFKIIAF). The Cytoplasmic segment spans residues 719–726 (DPYYYFQK). A helical membrane pass occupies residues 727 to 746 (KWNIFDCVIVTVSLLELSTS). At 747-752 (KKGSLS) the chain is on the extracellular side. The helical; Voltage-sensor transmembrane segment at 753–772 (VLRTFRLLRVFKLAKSWPTL) threads the bilayer. Topologically, residues 773-788 (NMLIKIIGNSVGALGN) are cytoplasmic. The helical transmembrane segment at 789 to 809 (LTFILAIIVFIFALVGKQLLS) threads the bilayer. At 810 to 833 (ENYGCRRDGISVWNGERLRWHMCD) the chain is on the extracellular side. Residues 834 to 854 (FFHSFLVVFRILCGEWIENMW) constitute an intramembrane region (pore-forming). Topologically, residues 855–863 (VCMEVSQDY) are extracellular. Cysteines 856 and 865 form a disulfide. A helical transmembrane segment spans residues 864-889 (ICLTLFLTVMVLGNLVVLNLFIALLL). At 890-1148 (NSFSADNLTA…GWQVRKTCYR (259 aa)) the chain is on the cytoplasmic side. The interval 1006 to 1094 (DLDELEEDVE…SEGSTVDCPD (89 aa)) is disordered. Polar residues predominate over residues 1017-1038 (ASQSSWQEESPKGQQELLQQVQ). One copy of the III repeat lies at 1141–1450 (QVRKTCYRIV…KKYYNAMKKL (310 aa)). The helical transmembrane segment at 1149-1172 (IVEHSWFESFIIFMILLSSGALAF) threads the bilayer. The Extracellular portion of the chain corresponds to 1173–1185 (EDNYLEEKPRVKS). The chain crosses the membrane as a helical span at residues 1186–1211 (VLEYTDRVFTFIFVFEMLLKWVAYGF). The Cytoplasmic portion of the chain corresponds to 1212 to 1217 (KKYFTN). Residues 1218–1239 (AWCWLDFLIVNISLTSLIAKIL) form a helical membrane-spanning segment. At 1240–1243 (EYSD) the chain is on the extracellular side. A helical; Voltage-sensor membrane pass occupies residues 1244–1265 (VASIKALRTLRALRPLRALSRF). The Cytoplasmic portion of the chain corresponds to 1266–1284 (EGMRVVVDALVGAIPSIMN). The chain crosses the membrane as a helical span at residues 1285-1312 (VLLVCLIFWLIFSIMGVNLFAGKFSRCV). Over 1313–1354 (DTRSNPFSVVNSTFVTNKSDCYNQNNTGHFFWVNVKVNFDNV) the chain is Extracellular. N-linked (GlcNAc...) asparagine glycosylation is found at asparagine 1323, asparagine 1329, and asparagine 1337. The segment at residues 1355 to 1376 (AMGYLALLQVATFKGWMDIMYA) is an intramembrane region (pore-forming). Residues 1377 to 1392 (AVDSRDINSQPNWEES) lie on the Extracellular side of the membrane. A helical transmembrane segment spans residues 1393-1419 (LYMYLYFVVFIIFGGFFTLNLFVGVII). The Cytoplasmic segment spans residues 1420-1472 (DNFNQQKKKLGGQDIFMTEEQKKYYNAMKKLGSKKPQKPIPRPLNKYQGFVFD). Serine 1452 carries the post-translational modification Phosphoserine; by PKC. One copy of the IV repeat lies at 1459–1758 (IPRPLNKYQG…WEKFDPEATQ (300 aa)). A helical membrane pass occupies residues 1473–1496 (IVTRQAFDIIIMALICLNMITMMV). Residues 1497–1507 (ETDNQSEEKTK) are Extracellular-facing. The N-linked (GlcNAc...) asparagine glycan is linked to asparagine 1500. A helical transmembrane segment spans residues 1508 to 1531 (VLGRINQFFVAVFTGECVMKMFAL). Over 1532-1537 (RQYYFT) the chain is Cytoplasmic. A helical membrane pass occupies residues 1538–1561 (NGWNVFDFIVVILSISSLLFSAIL). Residues 1562–1573 (SSLESYFSPTLL) are Extracellular-facing. A helical; Voltage-sensor transmembrane segment spans residues 1574–1595 (RVIRLARIGRILRLIRAAKGIR). Residues 1596 to 1610 (TLLFALMMSLPALFN) lie on the Cytoplasmic side of the membrane. Residues 1611 to 1633 (IGLLLFLVMFIYSIFGMASFANV) form a helical membrane-spanning segment. Residues 1634–1647 (IDEAGIDDMFNFKT) lie on the Extracellular side of the membrane. An intramembrane region (pore-forming) is located at residues 1648–1670 (FGNSMLCLFQITTSAGWDGLLSP). Over 1671–1698 (ILNTGPPYCDPNRPNSNGSKGNCGSPAV) the chain is Extracellular. Asparagine 1687 carries N-linked (GlcNAc...) asparagine glycosylation. Residues 1699–1723 (GILFFTTYIIISFLIVVNMYIAVIL) traverse the membrane as a helical segment. At 1724–1958 (ENFNVATEES…AKEGKSPGPQ (235 aa)) the chain is on the cytoplasmic side. One can recognise an IQ domain in the interval 1852-1881 (EDISATIIQKAYRNYMLQRSLMLSNPLHVP). The segment at 1901 to 1958 (NDNGGLPDKSETASATSFPPSYDSVTRGLSDRANISTSSSMQNEDEVTAKEGKSPGPQ) is disordered. Over residues 1933 to 1942 (ANISTSSSMQ) the composition is skewed to polar residues. A compositionally biased stretch (basic and acidic residues) spans 1947–1958 (VTAKEGKSPGPQ).

It belongs to the sodium channel (TC 1.A.1.10) family. Nav1.8/SCN10A subfamily. As to quaternary structure, the channel consists of an ion conducting pore forming alpha-subunit regulated by one or more associated auxiliary subunits SCN1B, SCN2B and SCN3B; electrophysiological properties may vary depending on the type of the associated beta subunits. Found in a number of complexes with PRX, DYNLT1 and PDZD2. Interacts with proteins such as FSTL1, PRX, DYNLT1, PDZD2, S100A10 and many others. Interacts with NEDD4 and NEDD4L. In terms of processing, ubiquitinated by NEDD4L; which promotes its endocytosis. Phosphorylation at Ser-1452 by PKC in a highly conserved cytoplasmic loop slows inactivation of the sodium channel and reduces peak sodium currents. Post-translationally, lacks the cysteine which covalently binds the conotoxin GVIIJ. This cysteine (position 815) is speculated in other sodium channel subunits alpha to be implied in covalent binding with the sodium channel subunit beta-2 or beta-4. In terms of tissue distribution, expressed in dorsal root ganglion and trigeminal ganglion.

Its subcellular location is the cell membrane. The enzyme catalyses Na(+)(in) = Na(+)(out). Its function is as follows. Tetrodotoxin-resistant channel that mediates the voltage-dependent sodium ion permeability of excitable membranes. Assuming opened or closed conformations in response to the voltage difference across the membrane, the protein forms a sodium-selective channel through which sodium ions may pass in accordance with their electrochemical gradient. Plays a role in neuropathic pain mechanisms. The chain is Sodium channel protein type 10 subunit alpha from Mus musculus (Mouse).